Consider the following 176-residue polypeptide: Large ribosomal subunit protein uL16 (176 aa).

The protein belongs to the universal ribosomal protein uL16 family.

This Thermoplasma acidophilum (strain ATCC 25905 / DSM 1728 / JCM 9062 / NBRC 15155 / AMRC-C165) protein is Large ribosomal subunit protein uL16.